Reading from the N-terminus, the 69-residue chain is Small, acid-soluble spore protein I (69 aa).

This sequence belongs to the SspI family.

Its subcellular location is the spore core. The protein is Small, acid-soluble spore protein I of Shouchella clausii (strain KSM-K16) (Alkalihalobacillus clausii).